Here is a 475-residue protein sequence, read N- to C-terminus: Aspartyl/glutamyl-tRNA(Asn/Gln) amidotransferase subunit B (475 aa).

This sequence belongs to the GatB/GatE family. GatB subfamily. In terms of assembly, heterotrimer of A, B and C subunits.

It carries out the reaction L-glutamyl-tRNA(Gln) + L-glutamine + ATP + H2O = L-glutaminyl-tRNA(Gln) + L-glutamate + ADP + phosphate + H(+). The enzyme catalyses L-aspartyl-tRNA(Asn) + L-glutamine + ATP + H2O = L-asparaginyl-tRNA(Asn) + L-glutamate + ADP + phosphate + 2 H(+). Allows the formation of correctly charged Asn-tRNA(Asn) or Gln-tRNA(Gln) through the transamidation of misacylated Asp-tRNA(Asn) or Glu-tRNA(Gln) in organisms which lack either or both of asparaginyl-tRNA or glutaminyl-tRNA synthetases. The reaction takes place in the presence of glutamine and ATP through an activated phospho-Asp-tRNA(Asn) or phospho-Glu-tRNA(Gln). This chain is Aspartyl/glutamyl-tRNA(Asn/Gln) amidotransferase subunit B, found in Chlorobium phaeobacteroides (strain DSM 266 / SMG 266 / 2430).